We begin with the raw amino-acid sequence, 38 residues long: L-amino-acid oxidase (38 aa).

It belongs to the flavin monoamine oxidase family. FIG1 subfamily. In terms of assembly, homodimer; non-covalently linked. Requires FAD as cofactor. In terms of processing, N-glycosylated. In terms of tissue distribution, expressed by the venom gland.

The protein localises to the secreted. The enzyme catalyses an L-alpha-amino acid + O2 + H2O = a 2-oxocarboxylate + H2O2 + NH4(+). It catalyses the reaction L-leucine + O2 + H2O = 4-methyl-2-oxopentanoate + H2O2 + NH4(+). The catalysed reaction is L-phenylalanine + O2 + H2O = 3-phenylpyruvate + H2O2 + NH4(+). It carries out the reaction L-tryptophan + O2 + H2O = indole-3-pyruvate + H2O2 + NH4(+). The enzyme catalyses L-methionine + O2 + H2O = 4-methylsulfanyl-2-oxobutanoate + H2O2 + NH4(+). It catalyses the reaction L-arginine + O2 + H2O = 5-guanidino-2-oxopentanoate + H2O2 + NH4(+). The catalysed reaction is L-2-aminohexanoate + O2 + H2O = 2-oxohexanoate + H2O2 + NH4(+). It carries out the reaction L-2-aminopentanoate + O2 + H2O = 2-oxopentanoate + H2O2 + NH4(+). The enzyme catalyses L-tyrosine + O2 + H2O = 3-(4-hydroxyphenyl)pyruvate + H2O2 + NH4(+). Functionally, catalyzes an oxidative deamination of predominantly hydrophobic and aromatic L-amino acids, thus producing hydrogen peroxide that may contribute to the diverse toxic effects of this enzyme. Is very active against L-Phe and L-Tyr, moderately active against L-Trp, L-Met, L-Leu, L-norleucine (L-2-aminohexanoate), L-Arg and L-norvaline (L-2-aminopentanoate), and slightly active against L-His, L-cystine, and L-Ile. L-Gln, L-Lys, L-Asn, L-ornithine, L-Ala and L-Val are oxidized very slowly. Exhibits diverse biological activities, such as hemorrhage, hemolysis, edema, apoptosis of vascular endothelial cells or tumor cell lines, antibacterial and antiparasitic activities. This protein inhibits both agonist- and shear stress-induced platelet aggregation (SIPA). Effects of snake L-amino oxidases on platelets are controversial, since they either induce aggregation or inhibit agonist-induced aggregation. These different effects are probably due to different experimental conditions. The sequence is that of L-amino-acid oxidase from Naja kaouthia (Monocled cobra).